A 167-amino-acid polypeptide reads, in one-letter code: Endoribonuclease YbeY (167 aa).

Residues His125, His129, and His135 each contribute to the Zn(2+) site.

Belongs to the endoribonuclease YbeY family. It depends on Zn(2+) as a cofactor.

It localises to the cytoplasm. In terms of biological role, single strand-specific metallo-endoribonuclease involved in late-stage 70S ribosome quality control and in maturation of the 3' terminus of the 16S rRNA. The sequence is that of Endoribonuclease YbeY from Allorhizobium ampelinum (strain ATCC BAA-846 / DSM 112012 / S4) (Agrobacterium vitis (strain S4)).